Reading from the N-terminus, the 306-residue chain is Agmatinase (306 aa).

Positions 126, 149, 151, 153, 230, and 232 each coordinate Mn(2+).

This sequence belongs to the arginase family. Agmatinase subfamily. Mn(2+) is required as a cofactor.

The enzyme catalyses agmatine + H2O = urea + putrescine. Its pathway is amine and polyamine biosynthesis; putrescine biosynthesis via agmatine pathway; putrescine from agmatine: step 1/1. In terms of biological role, catalyzes the formation of putrescine from agmatine. This chain is Agmatinase, found in Escherichia coli O9:H4 (strain HS).